Consider the following 457-residue polypeptide: Probable cytosolic Fe-S cluster assembly factor oxy-4 (457 aa).

C25 contributes to the [4Fe-4S] cluster binding site. The disordered stretch occupies residues 38–59; sequence KEESQVNIRTKKPKDKESSKTE. [4Fe-4S] cluster is bound by residues C71, C74, C77, C176, C232, C380, and C384.

This sequence belongs to the NARF family.

In terms of biological role, component of the cytosolic iron-sulfur (Fe/S) protein assembly machinery. Required for maturation of extramitochondrial Fe/S proteins. The polypeptide is Probable cytosolic Fe-S cluster assembly factor oxy-4 (oxy-4) (Caenorhabditis elegans).